Reading from the N-terminus, the 128-residue chain is Sulfurtransferase TusD (128 aa).

The active-site Cysteine persulfide intermediate is the cysteine 78.

The protein belongs to the DsrE/TusD family. As to quaternary structure, heterohexamer, formed by a dimer of trimers. The hexameric TusBCD complex contains 2 copies each of TusB, TusC and TusD. The TusBCD complex interacts with TusE.

Its subcellular location is the cytoplasm. In terms of biological role, part of a sulfur-relay system required for 2-thiolation of 5-methylaminomethyl-2-thiouridine (mnm(5)s(2)U) at tRNA wobble positions. Accepts sulfur from TusA and transfers it in turn to TusE. This is Sulfurtransferase TusD from Erwinia tasmaniensis (strain DSM 17950 / CFBP 7177 / CIP 109463 / NCPPB 4357 / Et1/99).